Reading from the N-terminus, the 310-residue chain is Junctional adhesion molecule C (310 aa).

Residues 1 to 31 (MALRRPPRLRLCARLPDFFLLLLFRGCLIGA) form the signal peptide. Topologically, residues 32–241 (VNLKSSNRTP…EQEMEVYDLN (210 aa)) are extracellular. The 93-residue stretch at 35 to 127 (KSSNRTPVVQ…VARNDRKEID (93 aa)) folds into the Ig-like V-type domain. Disulfide bonds link cysteine 53–cysteine 115 and cysteine 160–cysteine 219. N-linked (GlcNAc...) asparagine glycosylation is found at asparagine 104 and asparagine 192. Residues 139 to 236 (PVTPVCRVPK…SARCEEQEME (98 aa)) form the Ig-like C2-type domain. Residues 242 to 262 (IGGIIGGVLVVLAVLALITLG) form a helical membrane-spanning segment. Over 263–310 (ICCAYRRGYFINNKQDGESYKNPGKPDGVNYIRTDEEGDFRHKSSFVI) the chain is Cytoplasmic. 2 S-palmitoyl cysteine lipidation sites follow: cysteine 264 and cysteine 265.

It belongs to the immunoglobulin superfamily. Interacts with ITGAM. Interacts with GORASP2. Post-translationally, proteolytically cleaved from endothelial cells surface into a soluble form by ADAM10 and ADAM17; the release of soluble JAM3 is increased by pro-inflammatory factors. In terms of processing, S-palmitoylated by ZDHHC7. S-palmitoylation promotes expression at tight junctions. In terms of tissue distribution, detected on round and elongated spermatids (at protein level). Highest expression in placenta, brain and kidney. Significant expression is detected on platelets. Expressed in intestinal mucosa cells. Expressed in the vascular endothelium. Found in serum (at protein level). Also detected in the synovial fluid of patients with rheumatoid arthritis, psoriatic arthritis or ostearthritis (at protein level).

Its subcellular location is the cell membrane. It is found in the cell junction. The protein localises to the desmosome. The protein resides in the tight junction. It localises to the secreted. Junctional adhesion protein that mediates heterotypic cell-cell interactions with its cognate receptor JAM2 to regulate different cellular processes. Plays a role in homing and mobilization of hematopoietic stem and progenitor cells within the bone marrow. At the surface of bone marrow stromal cells, it contributes to the retention of the hematopoietic stem and progenitor cells expressing JAM3. Plays a central role in leukocytes extravasation by facilitating transmigration through the endothelium. Plays a role in spermatogenesis where JAM2 and JAM3, which are respectively expressed by Sertoli and germ cells, mediate an interaction between both cell types and play an essential role in the anchorage of germ cells onto Sertoli cells and the assembly of cell polarity complexes during spermatid differentiation. Also functions as a counter-receptor for ITGAM, mediating leukocyte-platelet interactions and is involved in the regulation of transepithelial migration of polymorphonuclear neutrophils (PMN). Plays a role in angiogenesis. Plays a role in the regulation of cell migration. During myogenesis, it is involved in myocyte fusion. Its function is as follows. Promotes chemotaxis of vascular endothelial cells and stimulates angiogenesis. The polypeptide is Junctional adhesion molecule C (JAM3) (Homo sapiens (Human)).